Reading from the N-terminus, the 277-residue chain is Large ribosomal subunit protein uL2 (277 aa).

2 disordered regions span residues 32–58 and 225–277; these read KSLT…RGGG and VAMN…RRNN.

Belongs to the universal ribosomal protein uL2 family. In terms of assembly, part of the 50S ribosomal subunit. Forms a bridge to the 30S subunit in the 70S ribosome.

In terms of biological role, one of the primary rRNA binding proteins. Required for association of the 30S and 50S subunits to form the 70S ribosome, for tRNA binding and peptide bond formation. It has been suggested to have peptidyltransferase activity; this is somewhat controversial. Makes several contacts with the 16S rRNA in the 70S ribosome. The sequence is that of Large ribosomal subunit protein uL2 from Borrelia duttonii (strain Ly).